Reading from the N-terminus, the 356-residue chain is MPRPLSATIHTSALANNLAVARRYAPKSKIWAVVKANAYGHGLARVFPGLRATDGFGLLDLEEAVKLRELGWAGPILLLEGFFRPTDIDVIDRYSLTTALHSDEQLRMLEMARLSKPVNIQLKMNTGMNRLGYTPEKFRAAWERARAAQGVGQITLMTHFSDADGDRGVDYQVQAFERGAQGIAGARSLANSAATLWHPATHFDWVRPGIIMYGASPSGVTAAIEGTGLQPAMTLASELIAVQTLSEGHTVGYGSSFKARGSMRIGVVACGYADGYPRVAPEGTPVIVDGVRTRVVGRVSMDMLTVDLTPVPTANVGSRVELWGTSLPIDDVAQACGTIGYELMCAVAPRVPVRAE.

Lys-35 (proton acceptor; specific for D-alanine) is an active-site residue. At Lys-35 the chain carries N6-(pyridoxal phosphate)lysine. A substrate-binding site is contributed by Arg-130. Tyr-253 serves as the catalytic Proton acceptor; specific for L-alanine. Met-301 contacts substrate.

It belongs to the alanine racemase family. Pyridoxal 5'-phosphate is required as a cofactor.

It carries out the reaction L-alanine = D-alanine. It participates in amino-acid biosynthesis; D-alanine biosynthesis; D-alanine from L-alanine: step 1/1. In terms of biological role, catalyzes the interconversion of L-alanine and D-alanine. May also act on other amino acids. In Paraburkholderia phytofirmans (strain DSM 17436 / LMG 22146 / PsJN) (Burkholderia phytofirmans), this protein is Alanine racemase (alr).